Here is a 20-residue protein sequence, read N- to C-terminus: RGSXLTILPLRNIRDIFYVG.

It belongs to the peptidase A1 family. N-glycosylated. As to expression, expressed in chorionic epithelium (trophectoderm).

It localises to the secreted. Its subcellular location is the extracellular space. In Bubalus bubalis (Domestic water buffalo), this protein is Pregnancy-associated glycoprotein 61C.